Here is a 390-residue protein sequence, read N- to C-terminus: UPF0229 protein OB2647 (390 aa).

Positions 99–121 (NASQQGQQGQGNGKKAGDQPGTD) are disordered.

The protein belongs to the UPF0229 family.

The sequence is that of UPF0229 protein OB2647 from Oceanobacillus iheyensis (strain DSM 14371 / CIP 107618 / JCM 11309 / KCTC 3954 / HTE831).